Consider the following 464-residue polypeptide: 3-isopropylmalate dehydratase large subunit (464 aa).

C337, C397, and C400 together coordinate [4Fe-4S] cluster.

Belongs to the aconitase/IPM isomerase family. LeuC type 1 subfamily. In terms of assembly, heterodimer of LeuC and LeuD. [4Fe-4S] cluster is required as a cofactor.

The catalysed reaction is (2R,3S)-3-isopropylmalate = (2S)-2-isopropylmalate. The protein operates within amino-acid biosynthesis; L-leucine biosynthesis; L-leucine from 3-methyl-2-oxobutanoate: step 2/4. Functionally, catalyzes the isomerization between 2-isopropylmalate and 3-isopropylmalate, via the formation of 2-isopropylmaleate. This is 3-isopropylmalate dehydratase large subunit from Bacillus thuringiensis subsp. konkukian (strain 97-27).